The primary structure comprises 586 residues: Ferredoxin--nitrite reductase, chloroplastic (586 aa).

A compositionally biased stretch (low complexity) spans 1–18; that stretch reads MTSFSLTFTSPLLPSSST. A disordered region spans residues 1-20; that stretch reads MTSFSLTFTSPLLPSSSTKP. A chloroplast-targeting transit peptide spans 1-25; it reads MTSFSLTFTSPLLPSSSTKPKRSVL. Lys-103 participates in a covalent cross-link: Glycyl lysine isopeptide (Lys-Gly) (interchain with G-Cter in ubiquitin). 4 residues coordinate [4Fe-4S] cluster: Cys-464, Cys-470, Cys-505, and Cys-509. Cys-509 provides a ligand contact to siroheme.

It belongs to the nitrite and sulfite reductase 4Fe-4S domain family. Monomer. It depends on siroheme as a cofactor. The cofactor is [4Fe-4S] cluster.

It is found in the plastid. It localises to the chloroplast. The catalysed reaction is 6 oxidized [2Fe-2S]-[ferredoxin] + NH4(+) + 2 H2O = nitrite + 6 reduced [2Fe-2S]-[ferredoxin] + 8 H(+). Its pathway is nitrogen metabolism; nitrate reduction (assimilation). Functionally, catalyzes the six-electron reduction of nitrite to ammonium. The sequence is that of Ferredoxin--nitrite reductase, chloroplastic (NIR1) from Arabidopsis thaliana (Mouse-ear cress).